We begin with the raw amino-acid sequence, 316 residues long: Palmitoyltransferase ZDHHC3-A (316 aa).

Over 1–45 the chain is Cytoplasmic; that stretch reads MRSPVPRFRDVERQASGLQPPQCLPSCHERQSSMWFIKDACGIVC. Residues 46-66 form a helical membrane-spanning segment; the sequence is AIITWFLVFFAEFVVLFVMLI. Over 67-70 the chain is Lumenal; sequence PSKN. Residues 71–91 traverse the membrane as a helical segment; that stretch reads LTYSLVNGTLFNSLAFLALAS. The Cytoplasmic segment spans residues 92 to 169; the sequence is HFRAMCTDPG…NCVGENNQKY (78 aa). In terms of domain architecture, DHHC spans 124–175; the sequence is VYKCPKCCSIKPDRAHHCSVCKRCIRKMDHHCPWVNNCVGENNQKYFVLFTM. Cysteine 144 is lipidated: S-palmitoyl cysteine. Cysteine 155 serves as the catalytic S-palmitoyl cysteine intermediate. A helical transmembrane segment spans residues 170–190; that stretch reads FVLFTMYICLISLHSLVMVVF. Residues 191–212 lie on the Lumenal side of the membrane; it reads HFLNCFEDDWTKCSTFSPPATV. The helical transmembrane segment at 213–233 threads the bilayer; that stretch reads ILLILLCFEGLLFLIFTSVMF. The Cytoplasmic portion of the chain corresponds to 234-316; it reads GTQVHSICTD…DVIEIPLEPH (83 aa).

Belongs to the DHHC palmitoyltransferase family. In terms of assembly, monomer. Homooligomers. The monomeric form has a higher catalytic activity. Forms heterooligomers with zdhhc7. Post-translationally, autopalmitoylated.

The protein localises to the golgi apparatus membrane. It carries out the reaction L-cysteinyl-[protein] + hexadecanoyl-CoA = S-hexadecanoyl-L-cysteinyl-[protein] + CoA. It catalyses the reaction L-cysteinyl-[protein] + tetradecanoyl-CoA = S-tetradecanoyl-L-cysteinyl-[protein] + CoA. The enzyme catalyses L-cysteinyl-[protein] + octadecanoyl-CoA = S-octadecanoyl-L-cysteinyl-[protein] + CoA. In terms of biological role, golgi-localized palmitoyltransferase that catalyzes the addition of palmitate onto various protein substrates and regulates their association with membranes. Has no stringent fatty acid selectivity and in addition to palmitate can also transfer onto target proteins myristate from tetradecanoyl-CoA and stearate from octadecanoyl-CoA. The polypeptide is Palmitoyltransferase ZDHHC3-A (zdhhc3a) (Danio rerio (Zebrafish)).